The sequence spans 555 residues: Genome polyprotein (555 aa).

At 1-7 (KHAQRIE) the chain is on the extracellular side. The chain crosses the membrane as a helical span at residues 8 to 28 (TWILRHPGFTIMAAILAYTIG). The Cytoplasmic portion of the chain corresponds to 29-34 (TTHFQR). The chain crosses the membrane as a helical span at residues 35 to 49 (ALIFILLTAVAPSMT). Residues 50–494 (MRCIGISNRD…LHQVFGAIYG (445 aa)) are Extracellular-facing. 4 disulfides stabilise this stretch: cysteine 52/cysteine 79, cysteine 109/cysteine 170, cysteine 123/cysteine 154, and cysteine 141/cysteine 165. Asparagine 116 carries an N-linked (GlcNAc...) asparagine; by host glycan. A fusion peptide region spans residues 147 to 160 (DRGWGNGCGLFGKG). Asparagine 202 carries N-linked (GlcNAc...) asparagine; by host glycosylation. Cystine bridges form between cysteine 234–cysteine 334 and cysteine 351–cysteine 382. The helical transmembrane segment at 495–515 (AAFSGVSWTMKILIGVIITWI) threads the bilayer. At 516–521 (GMNSRS) the chain is on the cytoplasmic side. A helical transmembrane segment spans residues 522–542 (TSLSVSLVLVGIVTLYLEVMV). The Extracellular segment spans residues 543 to 555 (QADSGCVVSWKNK).

As to quaternary structure, homodimer; in the endoplasmic reticulum and Golgi. Interacts with protein prM. Interacts with non-structural protein 1. Homodimer; Homohexamer when secreted. Interacts with envelope protein E. Post-translationally, N-glycosylated. N-glycosylated. The excreted form is glycosylated and this is required for efficient secretion of the protein from infected cells. In terms of processing, specific enzymatic cleavages in vivo yield mature proteins. Cleavages in the lumen of endoplasmic reticulum are performed by host signal peptidase, wereas cleavages in the cytoplasmic side are performed by serine protease NS3. Signal cleavage at the 2K-4B site requires a prior NS3 protease-mediated cleavage at the 4A-2K site.

Its subcellular location is the virion membrane. The protein localises to the host endoplasmic reticulum membrane. The protein resides in the secreted. Functionally, may play a role in virus budding. Exerts cytotoxic effects by activating a mitochondrial apoptotic pathway through M ectodomain. May display a viroporin activity. Binds to host cell surface receptor and mediates fusion between viral and cellular membranes. Envelope protein is synthesized in the endoplasmic reticulum in the form of heterodimer with protein prM. They play a role in virion budding in the ER, and the newly formed immature particle is covered with 60 spikes composed of heterodimer between precursor prM and envelope protein E. The virion is transported to the Golgi apparatus where the low pH causes dissociation of PrM-E heterodimers and formation of E homodimers. prM-E cleavage is inefficient, and many virions are only partially matured. These uncleaved prM would play a role in immune evasion. In terms of biological role, involved in immune evasion, pathogenesis and viral replication. Once cleaved off the polyprotein, is targeted to three destinations: the viral replication cycle, the plasma membrane and the extracellular compartment. Essential for viral replication. Required for formation of the replication complex and recruitment of other non-structural proteins to the ER-derived membrane structures. Excreted as a hexameric lipoparticle that plays a role against host immune response. Antagonizing the complement function. Binds to the host macrophages and dendritic cells. Inhibits signal transduction originating from Toll-like receptor 3 (TLR3). Its function is as follows. Disrupts the host endothelial glycocalyx layer of host pulmonary microvascular endothelial cells, inducing degradation of sialic acid and shedding of heparan sulfate proteoglycans. NS1 induces expression of sialidases, heparanase, and activates cathepsin L, which activates heparanase via enzymatic cleavage. These effects are probably linked to the endothelial hyperpermeability observed in severe dengue disease. This chain is Genome polyprotein, found in Dengue virus type 2 (strain Thailand/TH-36/1958) (DENV-2).